A 435-amino-acid chain; its full sequence is Probable tRNA pseudouridine synthase D (435 aa).

Aspartate 95 functions as the Nucleophile in the catalytic mechanism. A TRUD domain is found at 170 to 396 (GVPNYFGTQR…SSGTRRAVLV (227 aa)).

It belongs to the pseudouridine synthase TruD family.

The enzyme catalyses uridine(13) in tRNA = pseudouridine(13) in tRNA. Could be responsible for synthesis of pseudouridine from uracil-13 in transfer RNAs. The chain is Probable tRNA pseudouridine synthase D from Natronomonas pharaonis (strain ATCC 35678 / DSM 2160 / CIP 103997 / JCM 8858 / NBRC 14720 / NCIMB 2260 / Gabara) (Halobacterium pharaonis).